Reading from the N-terminus, the 192-residue chain is Putative 3-methyladenine DNA glycosylase (192 aa).

Belongs to the DNA glycosylase MPG family.

The protein is Putative 3-methyladenine DNA glycosylase of Methanoculleus marisnigri (strain ATCC 35101 / DSM 1498 / JR1).